Here is a 376-residue protein sequence, read N- to C-terminus: Light-dependent chlorophyll f synthase (376 aa).

The segment at 1 to 22 (MKLESDHVIATSDSSDYTSEPT) is disordered. Over residues 11 to 22 (TSDSSDYTSEPT) the composition is skewed to polar residues. A run of 5 helical transmembrane segments spans residues 51-68 (YVGW…TAAT), 140-155 (HFLI…EWEL), 164-178 (WISL…ASVS), 219-240 (LHQL…HGSL), and 298-312 (FLAA…SAAL). His-140 provides a ligand contact to a chlorophyll. A chlorophyll is bound at residue His-220.

It belongs to the reaction center PufL/M/PsbA/D family. As to quaternary structure, homodimer.

It localises to the cellular thylakoid membrane. Its function is as follows. Synthesizes chlorophyll f or chlorophyllide f (Chl f, 2-formyl chlorophyll a), probably by oxidation of chlorophyll a or chlorophyllide a and reduction of plastoquinone. The reaction is probably light-dependent. Chl f absorbs far red light (FRL, 707 nm in 100% methanol), and is synthesized when cells are grown in FRL, where it provides the advantage of extending the spectral range of harvested light in terrestrial cyanobacteria. When ectopically expressed in Synechococcus PCC 7002 (which does not grow in FRL and does not make Chl f) produces Chl f (0.059% of total chlorophyll). This is Light-dependent chlorophyll f synthase from Chlorogloeopsis fritschii (strain PCC 9212).